The chain runs to 896 residues: Zinc finger protein 574 (896 aa).

2 consecutive C2H2-type zinc fingers follow at residues 16–38 (YVCS…QNSH) and 76–98 (YQCL…QELH). A Phosphoserine modification is found at Ser113. The segment at 126 to 148 (YECVDCKALFASQELWLNHRQTH) adopts a C2H2-type 3 zinc-finger fold. Ser164 is subject to Phosphoserine. A C2H2-type 4 zinc finger spans residues 214–236 (YKCSECSQLFQLPADFLEHQATH). The tract at residues 239–301 (APVPESQEPA…RARRNNSGEA (63 aa)) is disordered. Polar residues predominate over residues 247–257 (PALQQEVQASS). The segment covering 274 to 287 (HSYELRNGEAIGRD) has biased composition (basic and acidic residues). Ser298 is subject to Phosphoserine. 4 C2H2-type zinc fingers span residues 309 to 331 (LFCS…LRSH), 336 to 358 (FKCP…LGDH), 364 to 386 (FLCV…RRAH), and 392 to 413 (HSCP…RRTH). A disordered region spans residues 434–460 (FPEPAPAETGEPEAPEPPVSEETSAGP). Residues 466–489 (YRCLLCSREFGKALQLTRHQRFVH) form a C2H2-type 9 zinc finger. A C2H2-type 10; degenerate zinc finger spans residues 495–517 (HKCSICGKMFKKKSHVRNHLRTH). 4 consecutive C2H2-type zinc fingers follow at residues 523 to 545 (FPCP…RLTH), 551 to 573 (YRCG…RLVH), 579 to 601 (YRCQ…RYHH), and 607 to 630 (YKCR…LVVH). Residues 636-659 (HRCPSCGAAFPSSLRLREHRCAAA) form a C2H2-type 15; degenerate zinc finger. The C2H2-type 16 zinc-finger motif lies at 667–689 (FECGTCGKKVGSAARLQAHEAAH). Residues 687-733 (AAHAAAGPGEVLAKEPPAPRAPRATRAPVASPAALGSTATASPAAPA) form a disordered region. Over residues 707-732 (APRATRAPVASPAALGSTATASPAAP) the composition is skewed to low complexity. Ser717 carries the post-translational modification Phosphoserine. Position 724 is a phosphothreonine (Thr724). Position 728 is a phosphoserine (Ser728). C2H2-type zinc fingers lie at residues 738-760 (LECS…RRIH), 766-788 (YPCP…RRLH), 794-816 (FACE…RRIH), and 822-844 (YSCP…RKTH). Arg832 is subject to Asymmetric dimethylarginine.

It belongs to the krueppel C2H2-type zinc-finger protein family.

It localises to the nucleus. In terms of biological role, may be involved in transcriptional regulation. In Homo sapiens (Human), this protein is Zinc finger protein 574 (ZNF574).